The chain runs to 160 residues: NADH-quinone oxidoreductase subunit B (160 aa).

C37, C38, C102, and C132 together coordinate [4Fe-4S] cluster.

Belongs to the complex I 20 kDa subunit family. In terms of assembly, NDH-1 is composed of 14 different subunits. Subunits NuoB, C, D, E, F, and G constitute the peripheral sector of the complex. It depends on [4Fe-4S] cluster as a cofactor.

It localises to the cell membrane. It catalyses the reaction a quinone + NADH + 5 H(+)(in) = a quinol + NAD(+) + 4 H(+)(out). Its function is as follows. NDH-1 shuttles electrons from NADH, via FMN and iron-sulfur (Fe-S) centers, to quinones in the respiratory chain. Couples the redox reaction to proton translocation (for every two electrons transferred, four hydrogen ions are translocated across the cytoplasmic membrane), and thus conserves the redox energy in a proton gradient. The chain is NADH-quinone oxidoreductase subunit B from Polynucleobacter asymbioticus (strain DSM 18221 / CIP 109841 / QLW-P1DMWA-1) (Polynucleobacter necessarius subsp. asymbioticus).